We begin with the raw amino-acid sequence, 469 residues long: Aspartyl/glutamyl-tRNA(Asn/Gln) amidotransferase subunit B (469 aa).

The protein belongs to the GatB/GatE family. GatB subfamily. Heterotrimer of A, B and C subunits.

The enzyme catalyses L-glutamyl-tRNA(Gln) + L-glutamine + ATP + H2O = L-glutaminyl-tRNA(Gln) + L-glutamate + ADP + phosphate + H(+). The catalysed reaction is L-aspartyl-tRNA(Asn) + L-glutamine + ATP + H2O = L-asparaginyl-tRNA(Asn) + L-glutamate + ADP + phosphate + 2 H(+). Allows the formation of correctly charged Asn-tRNA(Asn) or Gln-tRNA(Gln) through the transamidation of misacylated Asp-tRNA(Asn) or Glu-tRNA(Gln) in organisms which lack either or both of asparaginyl-tRNA or glutaminyl-tRNA synthetases. The reaction takes place in the presence of glutamine and ATP through an activated phospho-Asp-tRNA(Asn) or phospho-Glu-tRNA(Gln). In Thermus thermophilus (strain ATCC BAA-163 / DSM 7039 / HB27), this protein is Aspartyl/glutamyl-tRNA(Asn/Gln) amidotransferase subunit B.